A 446-amino-acid polypeptide reads, in one-letter code: Mycosin-1 (446 aa).

A signal peptide spans 1-21; the sequence is MHRIFLITVALALLTASPASA. The interval 24-43 is disordered; the sequence is PPPIDPGALPPDVTGPDQPT. Residues 64–387 form the Peptidase S8 domain; the sequence is PWSNTYLGVA…AGVIDAVAAL (324 aa). Active-site charge relay system residues include Asp-90, His-121, and Ser-332. Residues 419 to 439 traverse the membrane as a helical segment; sequence ITAVALVAVGLTLALGLGALA.

It belongs to the peptidase S8 family.

Its subcellular location is the cell membrane. Functionally, may play a dual role in regulation of ESX-1 secretion and virulence. Acts as a protease that cleaves EspB. Essential for ESX-1 function, required for early replication in macrophages and full virulence in mice. The protein is Mycosin-1 of Mycobacterium tuberculosis (strain ATCC 25618 / H37Rv).